Here is a 95-residue protein sequence, read N- to C-terminus: Osteocalcin-2 (95 aa).

Positions 1 to 23 are cleaved as a signal peptide; sequence MRTLSLLTLLALAALCLSDLTDA. Residues 24–49 constitute a propeptide that is removed on maturation; it reads KPSGPESDKAFMSKQEGNKVVNRLRR. In terms of domain architecture, Gla spans 46 to 92; it reads RLRRYLGASVPSPDPLEPTREQCELNPACDELSDQYGLKTAYKRIYG. Residues E62, E66, E69, and D75 each contribute to the Ca(2+) site. C68 and C74 are oxidised to a cystine.

Belongs to the osteocalcin/matrix Gla protein family. In terms of processing, gamma-carboxyglutamate residues are formed by vitamin K dependent carboxylation by GGCX. These residues are essential for the binding of calcium. Carboxylated in a Ptprv/Esp-dependent process. Decarboxylation promotes the hormone activity. Bone.

Its subcellular location is the secreted. The carboxylated form is one of the main organic components of the bone matrix, which constitutes 1-2% of the total bone protein: it acts as a negative regulator of bone formation and is required to limit bone formation without impairing bone resorption or mineralization. The carboxylated form binds strongly to apatite and calcium. In terms of biological role, the uncarboxylated form acts as a hormone secreted by osteoblasts, which regulates different cellular processes, such as energy metabolism, male fertility and brain development. Regulates of energy metabolism by acting as a hormone favoring pancreatic beta-cell proliferation, insulin secretion and sensitivity and energy expenditure. Uncarboxylated osteocalcin hormone also promotes testosterone production in the testes: acts as a ligand for G protein-coupled receptor GPRC6A at the surface of Leydig cells, initiating a signaling response that promotes the expression of enzymes required for testosterone synthesis in a CREB-dependent manner. Also acts as a regulator of brain development: osteocalcin hormone crosses the blood-brain barrier and acts as a ligand for GPR158 on neurons, initiating a signaling response that prevents neuronal apoptosis in the hippocampus, favors the synthesis of all monoamine neurotransmitters and inhibits that of gamma-aminobutyric acid (GABA). Osteocalcin also crosses the placenta during pregnancy and maternal osteocalcin is required for fetal brain development. The sequence is that of Osteocalcin-2 (Bglap2) from Mus musculus (Mouse).